Here is a 264-residue protein sequence, read N- to C-terminus: Glycosylphosphatidylinositol anchor biosynthesis protein 11 (264 aa).

The interval 1 to 45 (MPLVDPVTMSTPSTPAKAMGKSLPNTVKDPSPPPKAGSHTRSPVE) is disordered. 6 consecutive transmembrane segments (helical) span residues 49–69 (NSYY…VLLW), 83–103 (LILP…LPVA), 132–152 (LLSL…MVLF), 160–180 (APHT…PLFY), 202–222 (SVGG…PIPL), and 233–253 (VTVL…GRTL).

Belongs to the PIGF family.

It localises to the endoplasmic reticulum membrane. The protein operates within glycolipid biosynthesis; glycosylphosphatidylinositol-anchor biosynthesis. Functionally, acts in the GPI biosynthetic pathway between GlcNAc-PI synthesis and GPI transfer to protein. The sequence is that of Glycosylphosphatidylinositol anchor biosynthesis protein 11 (GPI11) from Pyricularia oryzae (strain 70-15 / ATCC MYA-4617 / FGSC 8958) (Rice blast fungus).